A 224-amino-acid chain; its full sequence is Metalloproteinase inhibitor 4 (224 aa).

A signal peptide spans M1–A29. Residue C30 participates in Zn(2+) binding. Involved in metalloproteinase-binding regions lie at residues C30 to A33 and S99 to S100. Intrachain disulfides connect C30–C102, C32–C131, C42–C156, C158–C205, C163–C168, and C176–C197. The region spanning C30 to C156 is the NTR domain.

Belongs to the protease inhibitor I35 (TIMP) family. As to expression, expressed in retina, smooth muscle, skin, pancreas, skeletal muscle, heart, brain, lung, kidney and testis. Not found in cartilage, spleen and liver.

The protein localises to the secreted. Functionally, complexes with metalloproteinases (such as collagenases) and irreversibly inactivates them by binding to their catalytic zinc cofactor. The chain is Metalloproteinase inhibitor 4 (Timp4) from Rattus norvegicus (Rat).